The following is a 215-amino-acid chain: UPF0502 protein YceH (215 aa).

The residue at position 80 (lysine 80) is an N6-acetyllysine.

The protein belongs to the UPF0502 family.

The polypeptide is UPF0502 protein YceH (Shigella boydii serotype 18 (strain CDC 3083-94 / BS512)).